The chain runs to 188 residues: Elongation factor P (188 aa).

The protein belongs to the elongation factor P family.

It localises to the cytoplasm. It participates in protein biosynthesis; polypeptide chain elongation. Its function is as follows. Involved in peptide bond synthesis. Stimulates efficient translation and peptide-bond synthesis on native or reconstituted 70S ribosomes in vitro. Probably functions indirectly by altering the affinity of the ribosome for aminoacyl-tRNA, thus increasing their reactivity as acceptors for peptidyl transferase. This is Elongation factor P from Leptospira interrogans serogroup Icterohaemorrhagiae serovar copenhageni (strain Fiocruz L1-130).